Reading from the N-terminus, the 175-residue chain is Protein MODIFYING WALL LIGNIN-1 (175 aa).

Positions 1 to 24 are cleaved as a signal peptide; that stretch reads MFIFLFGLAAFFLCLSAEFQKAKA. Over 25–52 the chain is Cytoplasmic; that stretch reads LLRAQVFLKGKDLKWDGESCYLPENRAF. A helical transmembrane segment spans residues 53-73; the sequence is GLGIAALVCVSVAQIVGNVVI. The Extracellular segment spans residues 74-86; it reads CRGFTKTDKTRTT. Residues 87–107 form a helical membrane-spanning segment; it reads IFCIILLLFSWVNFAVAVTLI. At 108 to 135 the chain is on the cytoplasmic side; sequence SVGASMNREQIYGKGWLNRECYLVKDGV. A helical transmembrane segment spans residues 136–156; sequence FAASGFLSVTTMAAILGAFAF. Topologically, residues 157-175 are extracellular; it reads KVKPSLQVENHDKRHTQNV.

Belongs to the DESIGUAL family. In terms of assembly, interacts with CRK19.

The protein localises to the cell membrane. In terms of biological role, together with MWL2, contributes to secondary cell wall biology, specifically lignin biosynthesis. This Arabidopsis thaliana (Mouse-ear cress) protein is Protein MODIFYING WALL LIGNIN-1.